We begin with the raw amino-acid sequence, 524 residues long: Glycoprotein (524 aa).

An N-terminal signal peptide occupies residues 1–19 (MVPQVLLFVPLLVFSMCFG). Residues 20 to 459 (KFPIYTIPDK…DLGLPSWGKY (440 aa)) lie on the Virion surface side of the membrane. 6 cysteine pairs are disulfide-bonded: cysteine 43/cysteine 302, cysteine 54/cysteine 226, cysteine 80/cysteine 113, cysteine 178/cysteine 188, cysteine 208/cysteine 247, and cysteine 242/cysteine 271. Asparagine 56 is a glycosylation site (N-linked (GlcNAc...) asparagine; by host). The N-linked (GlcNAc...) asparagine; by host glycan is linked to asparagine 338. Cysteine 363 and cysteine 370 are joined by a disulfide. Residues 460–480 (VLVSAGVLVVLMLTIFIMTCC) form a helical membrane-spanning segment. A lipid anchor (S-palmitoyl cysteine; by host) is attached at cysteine 480. Topologically, residues 481 to 524 (GRVHRPKSTQHGLGGTGRKVSVTSQSGKVISSWESYKSGGETRL) are intravirion.

This sequence belongs to the lyssavirus glycoprotein family. As to quaternary structure, homotrimer. Interacts with matrix protein. Interacts with host TRFC. Interacts with host BST2; this interaction inhibits viral budding by tethering new virions to the cell surface. Interacts with ITGB1. Interacts with host GRM2. In terms of processing, glycosylated and palmitoylated by host. Glycosylation is crucial for glycoprotein export at the cell surface.

Its subcellular location is the virion membrane. Attaches the virus to host cellular receptor, inducing endocytosis of the virion by using different host proteins including TFRC, GRM2 and ITGB1. In the endosome, the acidic pH induces conformational changes in the glycoprotein trimer, which trigger fusion between virus and cell membrane. There is convincing in vitro evidence that the muscular form of the nicotinic acetylcholine receptor (nAChR), the neuronal cell adhesion molecule (NCAM), and the p75 neurotrophin receptor (p75NTR) bind glycoprotein and thereby facilitate rabies virus entry into cells. In Homo sapiens (Human), this protein is Glycoprotein (G).